The following is a 248-amino-acid chain: 3-deoxy-manno-octulosonate cytidylyltransferase (248 aa).

Belongs to the KdsB family.

Its subcellular location is the cytoplasm. It catalyses the reaction 3-deoxy-alpha-D-manno-oct-2-ulosonate + CTP = CMP-3-deoxy-beta-D-manno-octulosonate + diphosphate. It participates in nucleotide-sugar biosynthesis; CMP-3-deoxy-D-manno-octulosonate biosynthesis; CMP-3-deoxy-D-manno-octulosonate from 3-deoxy-D-manno-octulosonate and CTP: step 1/1. It functions in the pathway bacterial outer membrane biogenesis; lipopolysaccharide biosynthesis. In terms of biological role, activates KDO (a required 8-carbon sugar) for incorporation into bacterial lipopolysaccharide in Gram-negative bacteria. The chain is 3-deoxy-manno-octulosonate cytidylyltransferase from Salmonella typhi.